We begin with the raw amino-acid sequence, 148 residues long: Lysozyme C (148 aa).

Positions 1-18 are cleaved as a signal peptide; the sequence is MKALIILGLVLLSVTVQG. The region spanning 19–148 is the C-type lysozyme domain; it reads KIFERCELAR…VSQYVEGCGV (130 aa). 4 cysteine pairs are disulfide-bonded: Cys24/Cys146, Cys48/Cys134, Cys83/Cys99, and Cys95/Cys113. Residues Glu53 and Asp71 contribute to the active site.

The protein belongs to the glycosyl hydrolase 22 family. In terms of assembly, monomer.

The enzyme catalyses Hydrolysis of (1-&gt;4)-beta-linkages between N-acetylmuramic acid and N-acetyl-D-glucosamine residues in a peptidoglycan and between N-acetyl-D-glucosamine residues in chitodextrins.. Functionally, lysozymes have primarily a bacteriolytic function; those in tissues and body fluids are associated with the monocyte-macrophage system and enhance the activity of immunoagents. The polypeptide is Lysozyme C (LYZ) (Colobus angolensis (Angolan colobus)).